The following is a 243-amino-acid chain: Cell division protein ZipA (243 aa).

Topologically, residues 1–4 (MSDM) are periplasmic. A helical transmembrane segment spans residues 5 to 25 (AMIRIGILIAGLLLVAAIFLF). Topologically, residues 26–243 (GRPKKSPQGR…APPLTKSPRW (218 aa)) are cytoplasmic. A disordered region spans residues 30–89 (KSPQGRRVDKGEGQPRERREPVISSEFGAEGDAAERAEGVEQSELNLEGQDASGGNEVGK). Basic and acidic residues predominate over residues 35 to 50 (RRVDKGEGQPRERREP).

The protein belongs to the ZipA family. As to quaternary structure, interacts with FtsZ via their C-terminal domains.

Its subcellular location is the cell inner membrane. Functionally, essential cell division protein that stabilizes the FtsZ protofilaments by cross-linking them and that serves as a cytoplasmic membrane anchor for the Z ring. Also required for the recruitment to the septal ring of downstream cell division proteins. This Xanthomonas axonopodis pv. citri (strain 306) protein is Cell division protein ZipA.